Reading from the N-terminus, the 236-residue chain is UPF0257 lipoprotein YnfC (236 aa).

A signal peptide spans Met-1–Gly-16. A lipid anchor (N-palmitoyl cysteine) is attached at Cys-17. The S-diacylglycerol cysteine moiety is linked to residue Cys-17.

It belongs to the UPF0257 family.

The protein resides in the cell membrane. The chain is UPF0257 lipoprotein YnfC from Escherichia coli O7:K1 (strain IAI39 / ExPEC).